The sequence spans 409 residues: Divalent metal cation transporter MntH (409 aa).

The next 11 helical transmembrane spans lie at 19–39 (LSLM…GNFA), 46–66 (ATFG…AMLV), 98–118 (WVQA…GAAI), 122–142 (LLFG…TFLI), 155–175 (LVIG…LIFS), 196–216 (AVFL…IYLH), 241–261 (IAMT…AAAF), 290–310 (VFGL…TLAG), 320–340 (FYIP…IVIL), 348–368 (ILVM…VPLL), and 388–408 (ILGK…LISL).

Belongs to the NRAMP family.

It localises to the cell inner membrane. In terms of biological role, h(+)-stimulated, divalent metal cation uptake system. The polypeptide is Divalent metal cation transporter MntH (Yersinia pseudotuberculosis serotype O:1b (strain IP 31758)).